The chain runs to 535 residues: MTDQTTRLPVRRALISVSDKTGILEFARELQQLGVEILSTGGTYKLLKDNGVNAVEVADYTGFAEMMDGRVKTLHPKIHGGILGRRGTDDAIMNEHGIKPIDLVAVNLYPFEATISKPGCDLPTAIENIDIGGPTMVRSAAKNHKDVAIVVNASDYAGIVEGLKVGGLTYAQRFDLMLKAFEHTAAYDGMIANYMGTIDQAKDTLSTADRSEFPRTFNSQFVKAQEMRYGENPHQSAAFYVEAKKGEASISTAIQLQGKELSFNNVADTDAALECVKSFVKPACVIVKHANPCGVAVVPEEEGGIRKAYDLAYATDTESAFGGIIAFNRELDGETAKAIVDRQFVEVIIAPKISQAARDVVAAKQNVRLLECGEWPAERAAGWDFKRVNGGLLVQSRDIGMITADDLKIVTKRAPTEQEIHDLVFAWKVAKFVKSNAIVYAKQRQTIGVGAGQMSRVNSARIAAIKAEHAGLQVQGAVMASDAFFPFRDGIDNAAKVGISAVIQPGGSMRDAEVIAAADEAGIAMVFTGMRHFRH.

One can recognise an MGS-like domain in the interval 6 to 151; the sequence is TRLPVRRALI…KNHKDVAIVV (146 aa).

It belongs to the PurH family.

The catalysed reaction is (6R)-10-formyltetrahydrofolate + 5-amino-1-(5-phospho-beta-D-ribosyl)imidazole-4-carboxamide = 5-formamido-1-(5-phospho-D-ribosyl)imidazole-4-carboxamide + (6S)-5,6,7,8-tetrahydrofolate. The enzyme catalyses IMP + H2O = 5-formamido-1-(5-phospho-D-ribosyl)imidazole-4-carboxamide. It functions in the pathway purine metabolism; IMP biosynthesis via de novo pathway; 5-formamido-1-(5-phospho-D-ribosyl)imidazole-4-carboxamide from 5-amino-1-(5-phospho-D-ribosyl)imidazole-4-carboxamide (10-formyl THF route): step 1/1. Its pathway is purine metabolism; IMP biosynthesis via de novo pathway; IMP from 5-formamido-1-(5-phospho-D-ribosyl)imidazole-4-carboxamide: step 1/1. The sequence is that of Bifunctional purine biosynthesis protein PurH from Pseudomonas putida (strain GB-1).